A 206-amino-acid polypeptide reads, in one-letter code: Methylthioribulose-1-phosphate dehydratase (206 aa).

Zn(2+)-binding residues include histidine 96 and histidine 98.

The protein belongs to the aldolase class II family. MtnB subfamily. Zn(2+) is required as a cofactor.

The enzyme catalyses 5-(methylsulfanyl)-D-ribulose 1-phosphate = 5-methylsulfanyl-2,3-dioxopentyl phosphate + H2O. It functions in the pathway amino-acid biosynthesis; L-methionine biosynthesis via salvage pathway; L-methionine from S-methyl-5-thio-alpha-D-ribose 1-phosphate: step 2/6. In terms of biological role, catalyzes the dehydration of methylthioribulose-1-phosphate (MTRu-1-P) into 2,3-diketo-5-methylthiopentyl-1-phosphate (DK-MTP-1-P). This Azotobacter vinelandii (strain DJ / ATCC BAA-1303) protein is Methylthioribulose-1-phosphate dehydratase.